A 148-amino-acid polypeptide reads, in one-letter code: MGQFIFVSFGFLVVATSLSGTEAGFCCPLGWSSYDEHCYQVFQQKMNWEDAEKFCTQQHKGSHLVSFHSSEEVDFVTSKTFPILKYDFVWIGLSNVWNECTKEWSDGTKLDYKAWSGGSDCIVSKTTDNQWLSMDCSSKRYVVCKFQA.

The N-terminal stretch at 1 to 23 (MGQFIFVSFGFLVVATSLSGTEA) is a signal peptide. Cystine bridges form between cysteine 27/cysteine 38, cysteine 55/cysteine 144, and cysteine 121/cysteine 136. Residues 34–145 (YDEHCYQVFQ…CSSKRYVVCK (112 aa)) enclose the C-type lectin domain.

The protein belongs to the snaclec family. In terms of assembly, tetramer of heterodimers of alpha and beta subunits (alphabeta)(4); disulfide-linked. In terms of tissue distribution, expressed by the venom gland.

It localises to the secreted. Strong platelet aggregation inhibitor. Binds specifically to platelet glycoprotein Ibalpha (GP1BA) with high affinity and inhibits vWF-dependent platelet aggregation. Has also been observed to induce small agglutinates in washed platelets by binding to GPIb. In Protobothrops flavoviridis (Habu), this protein is Snaclec flavocetin-A subunit beta.